Here is a 622-residue protein sequence, read N- to C-terminus: 3-(3-hydroxy-phenyl)propionate/3-hydroxycinnamic acid hydroxylase (622 aa).

FAD is bound by residues aspartate 20–lysine 49 and phenylalanine 288–aspartate 298.

The protein belongs to the PheA/TfdB FAD monooxygenase family. Requires FAD as cofactor.

It catalyses the reaction 3-(3-hydroxyphenyl)propanoate + NADH + O2 + H(+) = 3-(2,3-dihydroxyphenyl)propanoate + NAD(+) + H2O. It carries out the reaction (2E)-3-(3-hydroxyphenyl)prop-2-enoate + NADH + O2 + H(+) = (2E)-3-(2,3-dihydroxyphenyl)prop-2-enoate + NAD(+) + H2O. It participates in aromatic compound metabolism; 3-phenylpropanoate degradation. Functionally, catalyzes the insertion of one atom of molecular oxygen into position 2 of the phenyl ring of 3-(3-hydroxyphenyl)propionate (3-HPP) and hydroxycinnamic acid (3HCI). This is 3-(3-hydroxy-phenyl)propionate/3-hydroxycinnamic acid hydroxylase from Paraburkholderia xenovorans (strain LB400).